The chain runs to 396 residues: Period circadian protein (396 aa).

Disordered regions lie at residues 27-120, 167-188, 253-275, and 333-362; these read VTAP…APPV, SGPG…WEGE, GGNG…QYTQ, and SPSS…TSQA. Residues 93–114 are compositionally biased toward gly residues; that stretch reads GTSGTGNSGDGGGGGGANGTGS. Positions 253–262 are enriched in gly residues; that stretch reads GGNGNVGSGN. The segment covering 333–342 has biased composition (low complexity); that stretch reads SPSSTNTNPN.

As to quaternary structure, forms a heterodimer with timeless (TIM); the complex then translocates into the nucleus. In terms of processing, phosphorylated with a circadian rhythmicity, probably by the double-time protein (dbt). Phosphorylation could be implicated in the stability of per monomer and in the formation of heterodimer per-tim.

The protein resides in the nucleus. It is found in the cytoplasm. The protein localises to the perinuclear region. Its function is as follows. Essential for biological clock functions. Determines the period length of circadian and ultradian rhythms; an increase in PER dosage leads to shortened circadian rhythms and a decrease leads to lengthened circadian rhythms. Essential for the circadian rhythmicity of locomotor activity, eclosion behavior, and for the rhythmic component of the male courtship song that originates in the thoracic nervous system. The biological cycle depends on the rhythmic formation and nuclear localization of the TIM-PER complex. Light induces the degradation of TIM, which promotes elimination of PER. Nuclear activity of the heterodimer coordinatively regulates PER and TIM transcription through a negative feedback loop. Behaves as a negative element in circadian transcriptional loop. Does not appear to bind DNA, suggesting indirect transcriptional inhibition. The polypeptide is Period circadian protein (per) (Drosophila paulistorum (Fruit fly)).